The chain runs to 144 residues: Large ribosomal subunit protein uL16 (144 aa).

The protein belongs to the universal ribosomal protein uL16 family. As to quaternary structure, part of the 50S ribosomal subunit.

In terms of biological role, binds 23S rRNA and is also seen to make contacts with the A and possibly P site tRNAs. The chain is Large ribosomal subunit protein uL16 from Bacillus cereus (strain ATCC 10987 / NRS 248).